Here is a 1795-residue protein sequence, read N- to C-terminus: Type III effector AvrE (1795 aa).

Residues 1 to 18 are compositionally biased toward polar residues; the sequence is MQSPSIHRNTGSIIQPTV. Positions 1-227 are disordered; it reads MQSPSIHRNT…PPREPMLWRS (227 aa). A compositionally biased stretch (low complexity) spans 60–75; it reads KSKAPQQKAATPPTAK. Composition is skewed to polar residues over residues 97–109 and 117–127; these read GFSN…THSA and HPNQASSSGAQ. Residues 129 to 154 are compositionally biased toward basic and acidic residues; the sequence is HEIHPEAAPRKNLRVRFDLPQDRLER. The segment covering 174-191 has biased composition (polar residues); sequence ATRQFRSPDSHLQGSDGT. A compositionally biased stretch (low complexity) spans 203 to 215; the sequence is PSSSGSKIGDSDG. 2 short sequence motifs (wxxxE) span residues 393–397 and 829–833; these read WKIPE and WQRFE. The segment at 1461 to 1488 is disordered; the sequence is QIGGSHTAPTGTPASAPGPTPASQTAAN. The segment covering 1467-1487 has biased composition (low complexity); the sequence is TAPTGTPASAPGPTPASQTAA. The short motif at 1787–1790 is the ERMRS element; that stretch reads KKEG.

It belongs to the AvrE family. In terms of assembly, in planta interaction assays, interacts with the A.thaliana protein phosphatase 2A (PP2A) via direct interaction/association with specific B' regulatory subunits.

Its subcellular location is the secreted. It is found in the host cell. It localises to the host cell membrane. Its activity is regulated as follows. Polyamidoamine dendrimers inhibit channel and virulence activities. In terms of biological role, major virulence factor that may function as a water- and solute-permeable channel dedicated to creating osmotic/water potential perturbation and a water- and nutrient-rich apoplast in which bacteria multiply within the infected plant tissues. Expression in Xenopus oocytes results in inward and outward currents, permeability to water and osmolarity-dependent oocyte swelling and bursting. Functionally, elicits cell death in host tomato leaves and in non-host Nicotiana tabacum leaves. Acts within plant cells and promotes lesion formation. The combined action of AvrE and HopM1 is particularly important in promoting bacterial growth in plants. Contributes to the down-regulation of a specific subset of A.thaliana genes during infection, including NHL13, which is required for antibacterial immunity. This chain is Type III effector AvrE, found in Pseudomonas syringae pv. tomato (strain ATCC BAA-871 / DC3000).